A 132-amino-acid chain; its full sequence is Small ribosomal subunit protein uS8 (132 aa).

Belongs to the universal ribosomal protein uS8 family. Part of the 30S ribosomal subunit. Contacts proteins S5 and S12.

Functionally, one of the primary rRNA binding proteins, it binds directly to 16S rRNA central domain where it helps coordinate assembly of the platform of the 30S subunit. The polypeptide is Small ribosomal subunit protein uS8 (Treponema pallidum (strain Nichols)).